The chain runs to 724 residues: Catalase-peroxidase (724 aa).

Residues 98-226 (WHAAGTYRIA…LAAVMMGLIY (129 aa)) constitute a cross-link (tryptophyl-tyrosyl-methioninium (Trp-Tyr) (with M-252)). His99 functions as the Proton acceptor in the catalytic mechanism. The segment at residues 226–252 (YVNPEGVDGNPDPLKTAHDIRVTFERM) is a cross-link (tryptophyl-tyrosyl-methioninium (Tyr-Met) (with W-98)). A heme b-binding site is contributed by His267.

This sequence belongs to the peroxidase family. Peroxidase/catalase subfamily. As to quaternary structure, homodimer or homotetramer. It depends on heme b as a cofactor. In terms of processing, formation of the three residue Trp-Tyr-Met cross-link is important for the catalase, but not the peroxidase activity of the enzyme.

It catalyses the reaction H2O2 + AH2 = A + 2 H2O. The enzyme catalyses 2 H2O2 = O2 + 2 H2O. Bifunctional enzyme with both catalase and broad-spectrum peroxidase activity. The polypeptide is Catalase-peroxidase (Psychromonas ingrahamii (strain DSM 17664 / CCUG 51855 / 37)).